A 134-amino-acid chain; its full sequence is Methylglyoxal synthase (134 aa).

The MGS-like domain occupies 1 to 134 (MKIALIAHDR…DWRLIQERRN (134 aa)). Residues histidine 8, lysine 12, 34–37 (TGTT), and 54–55 (SG) contribute to the substrate site. Aspartate 60 functions as the Proton donor/acceptor in the catalytic mechanism. Residue histidine 87 coordinates substrate.

It belongs to the methylglyoxal synthase family.

It catalyses the reaction dihydroxyacetone phosphate = methylglyoxal + phosphate. In terms of biological role, catalyzes the formation of methylglyoxal from dihydroxyacetone phosphate. The sequence is that of Methylglyoxal synthase from Lysinibacillus sphaericus (strain C3-41).